Here is a 645-residue protein sequence, read N- to C-terminus: E3 ubiquitin-protein ligase ORTHRUS 2 (645 aa).

The segment at 12-63 (DGVCMRCKSNPPPEESLTCGTCVTPWHVSCLSSPPKTLASTLQWHCPDCSGE) adopts a PHD-type zinc-finger fold. A disordered region spans residues 96–133 (LSTEEKAKMRQRLLSGKGVEEDDEEEKRKKKGKGKNPN). The RING-type 1 zinc-finger motif lies at 146–185 (CSFCMQLPERPVTKPCGHNACLKCFEKWMGQGKRTCGKCR). A YDG domain is found at 273–422 (VRNQGLLVGE…FKVCRYLFVR (150 aa)). Residues 518 to 575 (CQICQQVLTLPVTTPCAHNFCKACLEAKFAGKTLVRERSTGGRTLRSRKNVLNCPCCP) form an RING-type 2 zinc finger. The stretch at 583 to 613 (QNPQVNREVAEVIEKLKTQEEDTAELEDEDE) forms a coiled coil. The disordered stretch occupies residues 599 to 645 (KTQEEDTAELEDEDEGECSGTTPEEDSEQPKKRIKLDTDATVSATIR). A compositionally biased stretch (acidic residues) spans 603 to 625 (EDTAELEDEDEGECSGTTPEEDS). Over residues 626–636 (EQPKKRIKLDT) the composition is skewed to basic and acidic residues.

As to quaternary structure, interacts with histones CENH3, HTB2, HTR3 and H4. Mostly expressed in inflorescence and, to a lower extent, in leaves.

Its subcellular location is the nucleus. It carries out the reaction S-ubiquitinyl-[E2 ubiquitin-conjugating enzyme]-L-cysteine + [acceptor protein]-L-lysine = [E2 ubiquitin-conjugating enzyme]-L-cysteine + N(6)-ubiquitinyl-[acceptor protein]-L-lysine.. The protein operates within protein modification; protein ubiquitination. E3 ubiquitin-protein ligase. Participates in CpG methylation-dependent transcriptional regulation and epigenetic transcriptional silencing. Mediates ubiquitination with the E2 ubiquitin-conjugating enzyme UBC11. Promotes methylation-mediated gene silencing leading, for example, to early flowering. Associates with methylated DNA, and can bind to CpG, CpNpG, and CpNpN DNA motifs, with a strong preference for methylated forms, and with highest affinity for CpG substrate. Probably acts at the DNA methylation?histone interface to maintain centromeric heterochromatin. This is E3 ubiquitin-protein ligase ORTHRUS 2 (ORTH2) from Arabidopsis thaliana (Mouse-ear cress).